Consider the following 292-residue polypeptide: 4-hydroxy-tetrahydrodipicolinate synthase (292 aa).

Thr45 lines the pyruvate pocket. The active-site Proton donor/acceptor is the Tyr133. The Schiff-base intermediate with substrate role is filled by Lys161. Ile203 contributes to the pyruvate binding site.

The protein belongs to the DapA family. Homotetramer; dimer of dimers.

Its subcellular location is the cytoplasm. It catalyses the reaction L-aspartate 4-semialdehyde + pyruvate = (2S,4S)-4-hydroxy-2,3,4,5-tetrahydrodipicolinate + H2O + H(+). The protein operates within amino-acid biosynthesis; L-lysine biosynthesis via DAP pathway; (S)-tetrahydrodipicolinate from L-aspartate: step 3/4. Catalyzes the condensation of (S)-aspartate-beta-semialdehyde [(S)-ASA] and pyruvate to 4-hydroxy-tetrahydrodipicolinate (HTPA). The protein is 4-hydroxy-tetrahydrodipicolinate synthase of Escherichia fergusonii (strain ATCC 35469 / DSM 13698 / CCUG 18766 / IAM 14443 / JCM 21226 / LMG 7866 / NBRC 102419 / NCTC 12128 / CDC 0568-73).